Consider the following 445-residue polypeptide: UPF0210 protein SUB1511 (445 aa).

This sequence belongs to the UPF0210 family. Homodimer.

The sequence is that of UPF0210 protein SUB1511 from Streptococcus uberis (strain ATCC BAA-854 / 0140J).